A 333-amino-acid chain; its full sequence is Ketol-acid reductoisomerase (NADP(+)) (333 aa).

Positions 2–182 constitute a KARI N-terminal Rossmann domain; sequence AKMYYDSDAS…GCTRAGVLET (181 aa). NADP(+) is bound by residues 25–28, R48, S51, and 83–86; these read YGSQ and DERQ. H108 is a catalytic residue. Position 134 (G134) interacts with NADP(+). The region spanning 183–328 is the KARI C-terminal knotted domain; that stretch reads TFKEETETDL…AELRAMMPFI (146 aa). Positions 191, 195, 227, and 231 each coordinate Mg(2+). S252 contributes to the substrate binding site.

It belongs to the ketol-acid reductoisomerase family. It depends on Mg(2+) as a cofactor.

It carries out the reaction (2R)-2,3-dihydroxy-3-methylbutanoate + NADP(+) = (2S)-2-acetolactate + NADPH + H(+). The enzyme catalyses (2R,3R)-2,3-dihydroxy-3-methylpentanoate + NADP(+) = (S)-2-ethyl-2-hydroxy-3-oxobutanoate + NADPH + H(+). Its pathway is amino-acid biosynthesis; L-isoleucine biosynthesis; L-isoleucine from 2-oxobutanoate: step 2/4. The protein operates within amino-acid biosynthesis; L-valine biosynthesis; L-valine from pyruvate: step 2/4. Involved in the biosynthesis of branched-chain amino acids (BCAA). Catalyzes an alkyl-migration followed by a ketol-acid reduction of (S)-2-acetolactate (S2AL) to yield (R)-2,3-dihydroxy-isovalerate. In the isomerase reaction, S2AL is rearranged via a Mg-dependent methyl migration to produce 3-hydroxy-3-methyl-2-ketobutyrate (HMKB). In the reductase reaction, this 2-ketoacid undergoes a metal-dependent reduction by NADPH to yield (R)-2,3-dihydroxy-isovalerate. This chain is Ketol-acid reductoisomerase (NADP(+)), found in Desulfitobacterium hafniense (strain DSM 10664 / DCB-2).